The chain runs to 465 residues: Cysteine--tRNA ligase (465 aa).

Cys29 provides a ligand contact to Zn(2+). The 'HIGH' region motif lies at 31-41; the sequence is PTVYNYIHIGN. Positions 209, 234, and 238 each coordinate Zn(2+). Residues 266 to 270 carry the 'KMSKS' region motif; it reads KMSKS. Lys269 contributes to the ATP binding site. A Phosphoserine modification is found at Ser270.

Belongs to the class-I aminoacyl-tRNA synthetase family. Monomer. Zn(2+) is required as a cofactor.

Its subcellular location is the cytoplasm. The catalysed reaction is tRNA(Cys) + L-cysteine + ATP = L-cysteinyl-tRNA(Cys) + AMP + diphosphate. This chain is Cysteine--tRNA ligase, found in Anoxybacillus flavithermus (strain DSM 21510 / WK1).